The following is a 482-amino-acid chain: E1B 55 kDa protein (482 aa).

The interval 73–94 (VLDSGEGPSCADDRDKQEKKES) is disordered. Basic and acidic residues predominate over residues 83–94 (ADDRDKQEKKES). Ser-476 and Ser-477 each carry phosphoserine.

This sequence belongs to the adenoviridae E1B 55 kDa protein family. In terms of assembly, interacts with host PML-4 and PML-5; this interaction promotes efficient subnuclear targeting of E1B-55K to PML nuclear bodies. Interacts with E4-ORF3 protein. Interacts with E4-ORF6 protein.

Its subcellular location is the host nucleus. It is found in the host cytoplasm. Plays a major role to prevent cellular inhibition of viral genome replication. Assembles an SCF-like E3 ubiquitin ligase complex based on the cellular proteins ELOB, ELOC, CUL5 and RBX1, in cooperation with viral E4orf6. This viral RING-type ligase ubiquitinates cellular substrates and targets them to proteasomal degradation: TP53/p53, LIG4, MRE11-RAD50-NBS1 (MRN) complex, ITGA3, DAXX and BLM. E1B-55K probably acts as the substrate-specific adapter of the SCF-like E3 ubiquitin ligase complex. Degradation of host TP53/p53 activity is essential for preventing E1A-induced TP53 accumulation that would otherwise lead to cell apoptosis and growth arrest. E1B-55K also inactivates TP53 transcription-factor activity by binding its transactivation domain. E1B-55K also functions as a SUMO1 E3 ligase for TP53 which causes the latter to be sequestered in promyelocytic leukemia (PML) nuclear bodies thereby contributing to maximal inhibition of TP53 function. This Homo sapiens (Human) protein is E1B 55 kDa protein.